A 343-amino-acid polypeptide reads, in one-letter code: Outer envelope pore protein 37, chloroplastic (343 aa).

2 stretches are compositionally biased toward polar residues: residues 1-11 and 23-43; these read MADPSSQNPNL and THQI…PCST. The tract at residues 1–43 is disordered; it reads MADPSSQNPNLATPPPPSSPSPTHQIQSGTSELSPPSRPPCST. The transit peptide at 1-73 directs the protein to the chloroplast; the sequence is MADPSSQNPN…DSLLFLNKVS (73 aa). Residues 74 to 76 lie on the Cytoplasmic side of the membrane; sequence CKL. A beta stranded transmembrane segment spans residues 77–86; sequence FDNLAKLKLS. At 87–103 the chain is on the chloroplast intermembrane side; that stretch reads FQNNSQREISQPQVSFT. A beta stranded transmembrane segment spans residues 104–113; sequence SKHVSVLYDV. At 114 to 129 the chain is on the cytoplasmic side; that stretch reads EEKNTFIKSTLDVHPR. Residues 130 to 137 traverse the membrane as a beta stranded segment; that stretch reads LQLRALHN. At 138–154 the chain is on the chloroplast intermembrane side; it reads VKAQQGEVAMEANLTEP. The chain crosses the membrane as a beta stranded span at residues 155–164; it reads GYSLELSSPV. The Cytoplasmic portion of the chain corresponds to 165-169; that stretch reads PIGYP. The chain crosses the membrane as a beta stranded span at residues 170–178; the sequence is RATLKFPLG. Residues 179–219 lie on the Chloroplast intermembrane side of the membrane; that stretch reads EISLQEKDEEEEEKQKRTLSVNGILKRQVMNGVCTALYTDE. A beta stranded transmembrane segment spans residues 220 to 228; it reads ELRLRYAYK. Over 229–230 the chain is Cytoplasmic; sequence DD. Residues 231–240 traverse the membrane as a beta stranded segment; sequence ALSFIPSISL. A topological domain (chloroplast intermembrane) is located at residue Pro241. The beta stranded transmembrane segment at 242-250 threads the bilayer; that stretch reads SNAASFAFK. The Cytoplasmic segment spans residues 251 to 257; the sequence is RRFSPSD. A beta stranded transmembrane segment spans residues 258–267; that stretch reads KLSYWYNFDS. Residues 268–269 lie on the Chloroplast intermembrane side of the membrane; it reads NM. The beta stranded transmembrane segment at 270–279 threads the bilayer; it reads WSAVYKRTYG. At 280 to 286 the chain is on the cytoplasmic side; the sequence is KDYKLKA. The chain crosses the membrane as a beta stranded span at residues 287–296; that stretch reads GYDSDVRLGW. Over 297-316 the chain is Chloroplast intermembrane; sequence ASLWVGDEAGKVKTTPMKMK. A beta stranded transmembrane segment spans residues 317 to 326; it reads VQFMLQVPQD. Over 327 to 343 the chain is Cytoplasmic; sequence DIKSSVLMFRVKKRWDI.

This sequence belongs to the plastid outer envelope porin OEP37 (TC 1.B.47) family. As to quaternary structure, forms an hourglass-shaped multimeric complex. As to expression, ubiquitously expressed at low levels. Mostly present in cotyledons, and accumulates in seedlings and embryos.

The protein localises to the plastid. The protein resides in the chloroplast outer membrane. Voltage-dependent peptide-sensitive high conductance rectifying cation channel with a strong affinity for TIC32 that is imported into the chloroplast. Conductance is pH-dependent decreasing with decreasing pH values. The sequence is that of Outer envelope pore protein 37, chloroplastic (OEP37) from Arabidopsis thaliana (Mouse-ear cress).